The chain runs to 163 residues: Staphylokinase (163 aa).

The first 27 residues, 1–27, serve as a signal peptide directing secretion; it reads MLKRSLLFLTVLLLLFSFSSITNEVSA.

Belongs to the staphylokinase family.

It is found in the secreted. In terms of biological role, potent plasminogen activator that converts plasminogen into plasmin. It forms a 1:1 complex with plasmin, which in turn activates other plasminogen molecules. The polypeptide is Staphylokinase (sak) (Staphylococcus aureus (Bacteriophage P42D)).